Here is a 91-residue protein sequence, read N- to C-terminus: Small ribosomal subunit protein bS16 (91 aa).

This sequence belongs to the bacterial ribosomal protein bS16 family.

This Exiguobacterium sibiricum (strain DSM 17290 / CCUG 55495 / CIP 109462 / JCM 13490 / 255-15) protein is Small ribosomal subunit protein bS16.